The following is a 208-amino-acid chain: MSNEFSLNAEKRDVQGKGASRRLRRVDGKVPGIIYGGETAPVAISVSHNQLSHALQNEAFYSHILTLDVEGTNESVILKDLQRHPYKPIIMHADFLRVQKDQKLHVNVPLHFINEDKCEGVRQGGGSISHQQTEVEVICLPANLPEFIEVDMTSVQVEQILHLSDLKLPEGVELAELTKGSDHDLPVVAVHKPKGAKADEAEGEGEAE.

The segment at 1–21 (MSNEFSLNAEKRDVQGKGASR) is disordered.

The protein belongs to the bacterial ribosomal protein bL25 family. CTC subfamily. In terms of assembly, part of the 50S ribosomal subunit; part of the 5S rRNA/L5/L18/L25 subcomplex. Contacts the 5S rRNA. Binds to the 5S rRNA independently of L5 and L18.

Its function is as follows. This is one of the proteins that binds to the 5S RNA in the ribosome where it forms part of the central protuberance. This Hahella chejuensis (strain KCTC 2396) protein is Large ribosomal subunit protein bL25.